A 239-amino-acid chain; its full sequence is Zinc finger protein 575 (239 aa).

The disordered stretch occupies residues 1–62 (MLGGSVKSEV…PQRPHRCPDC (62 aa)). Positions 22-31 (PETKAPHQDL) are enriched in basic and acidic residues. Residues 46–57 (RPRRRPPPQRPH) are compositionally biased toward basic residues. 6 consecutive C2H2-type zinc fingers follow at residues 57-79 (HRCPDCPKAFSYPSKLATHRLAH), 85-107 (HPCPDCPKAFSYPSKLAAHRLTH), 113-135 (HSCPHCPKAFGHRSKLAAHLWTH), 141-163 (YPCPDCPKSFCYPSKLAAHRHTH), 171-193 (YPCPHCPKAFSFPSKLAAHRLCH), and 207-230 (HRCSSCNQAFGQRRLLLVHQRSHH).

The protein belongs to the krueppel C2H2-type zinc-finger protein family.

It is found in the nucleus. May be involved in transcriptional regulation. The protein is Zinc finger protein 575 (Znf575) of Mus musculus (Mouse).